A 361-amino-acid polypeptide reads, in one-letter code: Pyruvate dehydrogenase E1 component subunit beta, mitochondrial (361 aa).

The transit peptide at 1-27 directs the protein to the mitochondrion; that stretch reads MAVNGCMRLLRNGLTSACALEQSVRRL. Glu90 contacts thiamine diphosphate. K(+) is bound by residues Ile143, Ala191, Val192, Asp194, and Asn196.

Heterotetramer of two PDHA1 and two PDHB subunits. The heterotetramer interacts with DLAT, and is part of the multimeric pyruvate dehydrogenase complex that contains multiple copies of pyruvate dehydrogenase (E1), dihydrolipoamide acetyltransferase (DLAT, E2) and lipoamide dehydrogenase (DLD, E3). Thiamine diphosphate serves as cofactor.

It localises to the mitochondrion matrix. The enzyme catalyses N(6)-[(R)-lipoyl]-L-lysyl-[protein] + pyruvate + H(+) = N(6)-[(R)-S(8)-acetyldihydrolipoyl]-L-lysyl-[protein] + CO2. In terms of biological role, the pyruvate dehydrogenase complex catalyzes the overall conversion of pyruvate to acetyl-CoA and CO(2), and thereby links the glycolytic pathway to the tricarboxylic cycle. The chain is Pyruvate dehydrogenase E1 component subunit beta, mitochondrial from Ascaris suum (Pig roundworm).